Here is a 355-residue protein sequence, read N- to C-terminus: Phosphoribosylformylglycinamidine cyclo-ligase (355 aa).

This sequence belongs to the AIR synthase family.

Its subcellular location is the cytoplasm. The enzyme catalyses 2-formamido-N(1)-(5-O-phospho-beta-D-ribosyl)acetamidine + ATP = 5-amino-1-(5-phospho-beta-D-ribosyl)imidazole + ADP + phosphate + H(+). It participates in purine metabolism; IMP biosynthesis via de novo pathway; 5-amino-1-(5-phospho-D-ribosyl)imidazole from N(2)-formyl-N(1)-(5-phospho-D-ribosyl)glycinamide: step 2/2. The sequence is that of Phosphoribosylformylglycinamidine cyclo-ligase from Methylobacterium nodulans (strain LMG 21967 / CNCM I-2342 / ORS 2060).